A 1376-amino-acid chain; its full sequence is MEATLEQRPFPYLATEANLLTQIKESAADGLFKSFQLLLGKDAREGSVRFEALLGVYTNVVEFVKFLETALAAACVNTEFKDLRRMIDGKIQFKISMPTIAHGDGRRPNKQRQYIVMKACNKHHIGAEIELAAADIELLFAEKETPLDFTEYAGAIKTITSALQFGMDALERGLVDTVLAVKLRHAPPVFILKTLGDPVYSERGLKKAVKSDMVSMFKAHLIEHSFFLDKAELMTRGKQYVLTMLSDMLAAVCEDTVFKGVSTYTTASGQQVAGVLETTDSVMRRLMNLLGQVESAMSGPAAYASYVVRGANLVTAVSYGRAMRNFEQFMARIVDHPNALPSVEGDKAALADGHDEIQRTRIAASLVKIGDKFVAIESLQRMYNETQFPCPLNRRIQYTYFFPVGLHLPVPRYSTSVSVRGVESPAIQSTETWVVNKNNVPLCFGYQNALKSICHPRMHNPTQSAQALNQAFPDPDGGHGYGLRYEQTPNMNLFRTFHQYYMGKNVAFVPDVAQKALVTTEDLLHPTSHRLLRLEVHPFFDFFVHPCPGARGSYRATHRTMVGNIPQPLAPREFQESRGAQFDAVTNMTHVIDQLTIDVIQETAFDPAYPLFCYVIEAMIHGQEEKFVMNMPLIALVIQTYWVNSGKLAFVNSYHMVRFICTHMGNGSIPKEAHGHYRKILGELIALEQALLKLAGHETVGRTPITHLVSALLDPHLLPPFAYHDVFTDLMQKSSRQPIIKIGDQNYDNPQNRATFINLRGRMEDLVNNLVNIYQTRVNEDHDERHVLDVAPLDENDYNPVLEKLFYYVLMPVCSNGHMCGMGVDYQNVALTLTYNGPVFADVVNAQDDILLHLENGTLKDILQAGDIRPTVDMIRVLCTSFLTCPFVTQAARVITKRDPAQSFATHEYGKDVAQTVLVNGFGAFAVADRSREAAETMFYPVPFNKLYADPLVAATLHPLLANYVTRLPNQRNAVVFNVPSNLMAEYEEWHKSPVAAYAASCQATPGAISAMVSMHQKLSAPSFICQAKHRMHPGFAMTVVRTDEVLAEHILYCSRASTSMFVGLPSVVRREVRSDAVTFEITHEIASLHTALGYSSVIAPAHVAAITTDMGVHCQDLFMIFPGDAYQDRQLHDYIKMKAGVQTGSPGNRMDHVGYTAGVPRCENLPGLSHGQLATCEIIPTPVTSDVAYFQTPSNPRGRAACVVSCDAYSNESAERLLYDHSIPDPAYECRSTNNPWASQRGSLGDVLYNITFRQTALPGMYSPCRQFFHKEDIMRYNRGLYTLVNEYSARLAGAPATSTTDLQYVVVNGTDVFLDQPCHMLQEAYPTLAASHRVMLDEYMSNKQTHAPVHMGQYLIEEVAPMKRLLKLGNKVVY.

This sequence belongs to the herpesviridae major capsid protein family. Homomultimer. Makes the hexons and eleven out of twelve pentons. Interacts with triplex proteins 1/TRX1 and 2/TRX2; adjacent capsomers are linked together in groups of three by triplexes, heterotrimeric complexes composed of one molecule of TRX1 and two molecules of TRX2. Interacts with scaffold protein; this interaction allows efficient MCP transport to the host nucleus. Interacts with capsid vertex component 2/CVC2. Interacts with the small capsomere-interacting protein/SCP.

The protein localises to the virion. The protein resides in the host nucleus. Its function is as follows. Self-assembles to form an icosahedral capsid with a T=16 symmetry, about 200 nm in diameter, and consisting of 150 hexons and 12 pentons (total of 162 capsomers). Hexons form the edges and faces of the capsid and are each composed of six MCP molecules. In contrast, one penton is found at each of the 12 vertices. Eleven of the pentons are MCP pentamers, while the last vertex is occupied by the portal complex. The capsid is surrounded by a layer of proteinaceous material designated the tegument which, in turn, is enclosed in an envelope of host cell-derived lipids containing virus-encoded glycoproteins. The chain is Major capsid protein from Human herpesvirus 8 type P (isolate GK18) (HHV-8).